We begin with the raw amino-acid sequence, 109 residues long: Nucleoid-associated protein CC_0268 (109 aa).

The protein belongs to the YbaB/EbfC family. As to quaternary structure, homodimer.

The protein localises to the cytoplasm. Its subcellular location is the nucleoid. Its function is as follows. Binds to DNA and alters its conformation. May be involved in regulation of gene expression, nucleoid organization and DNA protection. This chain is Nucleoid-associated protein CC_0268, found in Caulobacter vibrioides (strain ATCC 19089 / CIP 103742 / CB 15) (Caulobacter crescentus).